Consider the following 263-residue polypeptide: Outer membrane lipoprotein 3 (263 aa).

Positions 1 to 19 (MKIMKLAGAVAIFSLFLTA) are cleaved as a signal peptide. C20 is lipidated: N-palmitoyl cysteine. The S-diacylglycerol cysteine moiety is linked to residue C20.

It belongs to the NlpA lipoprotein family.

Its subcellular location is the cell outer membrane. The sequence is that of Outer membrane lipoprotein 3 (plpC) from Mannheimia haemolytica (Pasteurella haemolytica).